The primary structure comprises 193 residues: Potassium-transporting ATPase KdpC subunit (193 aa).

Residues 7-27 (PALVLFAALTLLTGVAYPLAV) traverse the membrane as a helical segment.

The protein belongs to the KdpC family. As to quaternary structure, the system is composed of three essential subunits: KdpA, KdpB and KdpC.

Its subcellular location is the cell inner membrane. Part of the high-affinity ATP-driven potassium transport (or Kdp) system, which catalyzes the hydrolysis of ATP coupled with the electrogenic transport of potassium into the cytoplasm. This subunit acts as a catalytic chaperone that increases the ATP-binding affinity of the ATP-hydrolyzing subunit KdpB by the formation of a transient KdpB/KdpC/ATP ternary complex. In Rhodospirillum rubrum (strain ATCC 11170 / ATH 1.1.1 / DSM 467 / LMG 4362 / NCIMB 8255 / S1), this protein is Potassium-transporting ATPase KdpC subunit.